Consider the following 545-residue polypeptide: Probable bifunctional tRNA threonylcarbamoyladenosine biosynthesis protein (545 aa).

The kae1 stretch occupies residues Met-1–Trp-329. Fe cation contacts are provided by His-112, His-116, and Tyr-133. L-threonylcarbamoyladenylate-binding positions include Tyr-133 to Gly-137, Asp-165, Gly-178, Glu-182, and Asn-262. A Fe cation-binding site is contributed by Asp-290. A Protein kinase domain is found at Ile-344–Leu-545. ATP is bound by residues Ile-350–Ile-358 and Lys-371. The Proton acceptor; for kinase activity role is filled by Asp-463.

The protein in the N-terminal section; belongs to the KAE1 / TsaD family. In the C-terminal section; belongs to the protein kinase superfamily. Tyr protein kinase family. BUD32 subfamily. Component of the KEOPS complex that consists of Kae1, Bud32, Cgi121 and Pcc1; the whole complex dimerizes. Fe(2+) is required as a cofactor.

It is found in the cytoplasm. It catalyses the reaction L-seryl-[protein] + ATP = O-phospho-L-seryl-[protein] + ADP + H(+). The catalysed reaction is L-threonyl-[protein] + ATP = O-phospho-L-threonyl-[protein] + ADP + H(+). The enzyme catalyses L-threonylcarbamoyladenylate + adenosine(37) in tRNA = N(6)-L-threonylcarbamoyladenosine(37) in tRNA + AMP + H(+). Functionally, required for the formation of a threonylcarbamoyl group on adenosine at position 37 (t(6)A37) in tRNAs that read codons beginning with adenine. Is a component of the KEOPS complex that is probably involved in the transfer of the threonylcarbamoyl moiety of threonylcarbamoyl-AMP (TC-AMP) to the N6 group of A37. The Kae1 domain likely plays a direct catalytic role in this reaction. The Bud32 domain probably displays kinase activity that regulates Kae1 function. The protein is Probable bifunctional tRNA threonylcarbamoyladenosine biosynthesis protein of Methanococcus maripaludis (strain C5 / ATCC BAA-1333).